A 569-amino-acid polypeptide reads, in one-letter code: Dolichol kinase EVAN (569 aa).

The Cytoplasmic segment spans residues 1–22; that stretch reads MKTTATSFVTGERVVVFVVVSR. A helical membrane pass occupies residues 23–43; the sequence is ILLSLPLSLISHGFSLFLLSL. At 44-67 the chain is on the lumenal side; it reads SAFLVEIRVETSPFLLSHFSSRRG. The chain crosses the membrane as a helical span at residues 68 to 88; sequence ASSGILLGAVTLPSVMISKLV. Residues 89–108 lie on the Cytoplasmic side of the membrane; that stretch reads QLSRAISIHEAEQDELAHVT. Residues 109–129 form a helical membrane-spanning segment; sequence MQYWAASASCCAILIYLSVIM. The Lumenal portion of the chain corresponds to 130–147; sequence SQVRKDESLSSSSIWLTR. The chain crosses the membrane as a helical span at residues 148–168; sequence VSLTGTVLYGVACFVSLSMIS. At 169–178 the chain is on the cytoplasmic side; sequence HTGLNTSLKM. A helical membrane pass occupies residues 179–199; the sequence is LWMLFHGLAAVKLIRHLLCTF. The Lumenal portion of the chain corresponds to 200-207; the sequence is PSCASIGE. A helical transmembrane segment spans residues 208 to 228; that stretch reads ALLVTSGLVLYFGDFLACTIA. Residues 229 to 252 are Cytoplasmic-facing; the sequence is KIFEKLIPVDLVSISYGIKRTETG. The helical transmembrane segment at 253–273 threads the bilayer; that stretch reads IIVQGLLLGLLLFPMVFRFVL. Over 274–296 the chain is Lumenal; it reads HIYESSLRKRDARQRNCSDAAKS. Asparagine 289 carries N-linked (GlcNAc...) asparagine glycosylation. Residues 297–317 form a helical membrane-spanning segment; the sequence is VLFFVSLLFFMVVAVPSWMQF. The Cytoplasmic segment spans residues 318-340; it reads VHDFNQHPFLWVLTFVFSEPLKR. The chain crosses the membrane as a helical span at residues 341–361; the sequence is LSLCIYWILLIVVSVSRFYNI. The Lumenal portion of the chain corresponds to 362-369; it reads SRSSKVER. A helical membrane pass occupies residues 370–390; it reads ILLRKYYHLMAVLMFLPALVL. Residues 391–393 are Cytoplasmic-facing; sequence QPK. A helical membrane pass occupies residues 394–414; that stretch reads FLDLAFGAALAVFVALEIIRI. The Lumenal segment spans residues 415–440; it reads WRIQPLGEPLHQFMNAFTDHRDSEHL. A helical membrane pass occupies residues 441–461; it reads IVSHFSLLLGCALPIWMSSGF. At 462-464 the chain is on the cytoplasmic side; that stretch reads NDR. The chain crosses the membrane as a helical span at residues 465-485; it reads ALSPFAGILSLGIGDTMASMV. The Lumenal portion of the chain corresponds to 486–508; it reads GHKYGVLRWSKTGKKTVEGTAAG. Positions 487–503 are CTP-binding; that stretch reads HKYGVLRWSKTGKKTVE. A helical transmembrane segment spans residues 509–529; the sequence is ITSMMAVCFVLVPILASMGYI. Over 530 to 548 the chain is Cytoplasmic; it reads LSQGWWSLLVAVTATGMLE. A helical transmembrane segment spans residues 549–569; the sequence is AYTAQLDNAFIPLVFYSLLCL.

The protein belongs to the polyprenol kinase family.

It is found in the endoplasmic reticulum membrane. It catalyses the reaction a di-trans,poly-cis-dolichol + CTP = a di-trans,poly-cis-dolichyl phosphate + CDP + H(+). In terms of biological role, essential for pollen development. Involved in protein N-glycosylation in the endoplasmic reticulum (ER), especially in the female gametophyte. Mediates pollen tube (PT) reception in synergids through protein glycosylation. The protein is Dolichol kinase EVAN of Arabidopsis thaliana (Mouse-ear cress).